Consider the following 365-residue polypeptide: UDP-N-acetylglucosamine--N-acetylmuramyl-(pentapeptide) pyrophosphoryl-undecaprenol N-acetylglucosamine transferase (365 aa).

UDP-N-acetyl-alpha-D-glucosamine is bound by residues 19–21 (TGG), asparagine 131, arginine 170, serine 201, isoleucine 255, 274–279 (ALTVTE), and glutamine 300.

Belongs to the glycosyltransferase 28 family. MurG subfamily.

The protein localises to the cell inner membrane. It carries out the reaction di-trans,octa-cis-undecaprenyl diphospho-N-acetyl-alpha-D-muramoyl-L-alanyl-D-glutamyl-meso-2,6-diaminopimeloyl-D-alanyl-D-alanine + UDP-N-acetyl-alpha-D-glucosamine = di-trans,octa-cis-undecaprenyl diphospho-[N-acetyl-alpha-D-glucosaminyl-(1-&gt;4)]-N-acetyl-alpha-D-muramoyl-L-alanyl-D-glutamyl-meso-2,6-diaminopimeloyl-D-alanyl-D-alanine + UDP + H(+). It functions in the pathway cell wall biogenesis; peptidoglycan biosynthesis. Cell wall formation. Catalyzes the transfer of a GlcNAc subunit on undecaprenyl-pyrophosphoryl-MurNAc-pentapeptide (lipid intermediate I) to form undecaprenyl-pyrophosphoryl-MurNAc-(pentapeptide)GlcNAc (lipid intermediate II). The protein is UDP-N-acetylglucosamine--N-acetylmuramyl-(pentapeptide) pyrophosphoryl-undecaprenol N-acetylglucosamine transferase of Acinetobacter baumannii (strain ACICU).